The sequence spans 325 residues: MRSVQAPVVCPAIRPRQVGACASLVNYTGLKPRSQFWGNRTKGVKSQGTTTTITLRLCNKSIKCVFSSHSDGNGSTAENFNENDEEYVNSSVVEAVEVKSGADGFMVKMRDGRQLRCVHNNPQGGHLPDYAPHPAIVLKMEDGTGLLLPIIVLEMPSVLLMAAMTNVQIARPTMYQVVKEMVDKMGYEVRLVRVTKRVHEAYFAQLFLSKVGNASECVSFDLRPSDAINIAVRCKIPIQVNKYLAYSDGMRVIESGKISTPAPASDGLLFTEQDRPNGQACLDTKEFNILSKMMQAVDEERYDEAAEWRDKLGQFRAKRNLRKYT.

Positions 117 to 252 constitute a BFN domain; sequence CVHNNPQGGH…YLAYSDGMRV (136 aa). The UVR domain occupies 284–318; it reads TKEFNILSKMMQAVDEERYDEAAEWRDKLGQFRAK.

Belongs to the bifunctional nuclease family.

The protein localises to the nucleus. Its function is as follows. Bifunctional nuclease with both RNase and DNase activities. Involved in basal defense response. Participates in abscisic acid-derived callose deposition following infection by a necrotrophic pathogen. The chain is Bifunctional nuclease 1 (BBD1) from Arabidopsis thaliana (Mouse-ear cress).